A 93-amino-acid chain; its full sequence is Toxin RelE1 (93 aa).

It belongs to the RelE toxin family.

Toxic component of a type II toxin-antitoxin (TA) system. Its toxic effect is neutralized by coexpression with cognate antitoxin RelB1 but no other ParD or RelB antitoxin. In Caulobacter vibrioides (strain ATCC 19089 / CIP 103742 / CB 15) (Caulobacter crescentus), this protein is Toxin RelE1 (relE1).